Reading from the N-terminus, the 473-residue chain is Pup--protein ligase (473 aa).

Glu-9 serves as a coordination point for Mg(2+). Arg-54 provides a ligand contact to ATP. Tyr-56 is a binding site for Mg(2+). Residue Asp-58 is the Proton acceptor of the active site. Glu-64 lines the Mg(2+) pocket. The ATP site is built by Thr-67 and Trp-425.

This sequence belongs to the Pup ligase/Pup deamidase family. Pup-conjugating enzyme subfamily.

The catalysed reaction is ATP + [prokaryotic ubiquitin-like protein]-L-glutamate + [protein]-L-lysine = ADP + phosphate + N(6)-([prokaryotic ubiquitin-like protein]-gamma-L-glutamyl)-[protein]-L-lysine.. It functions in the pathway protein degradation; proteasomal Pup-dependent pathway. Its pathway is protein modification; protein pupylation. Catalyzes the covalent attachment of the prokaryotic ubiquitin-like protein modifier Pup to the proteasomal substrate proteins, thereby targeting them for proteasomal degradation. This tagging system is termed pupylation. The ligation reaction involves the side-chain carboxylate of the C-terminal glutamate of Pup and the side-chain amino group of a substrate lysine. The protein is Pup--protein ligase of Brachybacterium faecium (strain ATCC 43885 / DSM 4810 / JCM 11609 / LMG 19847 / NBRC 14762 / NCIMB 9860 / 6-10).